The following is a 125-amino-acid chain: uncharacterized protein (125 aa).

The HTH cro/C1-type domain occupies 19–73 (IYSLRLAKGLSRQQLAEVIDVTHQQLQKYEKAINRISVGRLVLIAEALDRNIDYF). Residues 30–49 (RQQLAEVIDVTHQQLQKYEK) constitute a DNA-binding region (H-T-H motif).

This is an uncharacterized protein from Rickettsia conorii (strain ATCC VR-613 / Malish 7).